An 822-amino-acid chain; its full sequence is Fibroblast growth factor receptor 1 (822 aa).

An N-terminal signal peptide occupies residues 1-21 (MWSWKCLLFWAVLVTATLCTA). Over 22–376 (RPSPTLPEQA…AVMTSPLYLE (355 aa)) the chain is Extracellular. In terms of domain architecture, Ig-like C2-type 1 spans 25 to 119 (PTLPEQAQPW…DTTYFSVNVS (95 aa)). C55 and C101 are disulfide-bonded. N-linked (GlcNAc...) asparagine glycans are attached at residues N77 and N117. Positions 120 to 154 (DALPSSEDDDDDDDSSSEEKETDNTKPNRMPVAPY) are disordered. Residues 125 to 135 (SEDDDDDDDSS) show a composition bias toward acidic residues. Basic and acidic residues predominate over residues 136–145 (SEEKETDNTK). Ig-like C2-type domains follow at residues 158–246 (PEKM…YQLD) and 255–357 (PILQ…AWLT). The tract at residues 160 to 177 (KMEKKLHAVPAAKTVKFK) is heparin-binding. A disulfide bridge connects residues C178 and C230. N227, N240, N264, N296, N317, and N330 each carry an N-linked (GlcNAc...) asparagine glycan. C277 and C341 form a disulfide bridge. Residues 377–397 (IIIYCTGAFLISCMVGSVIVY) form a helical membrane-spanning segment. Over 398-822 (KMKSGTKKSD…QLANGGLKRR (425 aa)) the chain is Cytoplasmic. Phosphotyrosine; by autocatalysis is present on Y463. Residues 478–767 (LVLGKPLGEG…VALTSNQEYL (290 aa)) form the Protein kinase domain. Residues 484 to 490 (LGEGCFG), K514, 562 to 564 (EYA), and N568 contribute to the ATP site. Phosphotyrosine; by autocatalysis occurs at positions 583 and 585. D623 acts as the Proton acceptor in catalysis. ATP contacts are provided by R627 and D641. A phosphotyrosine; by autocatalysis mark is found at Y653, Y654, Y730, and Y766. Residues 778–792 (PSFPDTRSSTCSSGE) are compositionally biased toward polar residues. Residues 778–822 (PSFPDTRSSTCSSGEDSVFSHEPLPEEPCLPRHPAQLANGGLKRR) form a disordered region.

Belongs to the protein kinase superfamily. Tyr protein kinase family. Fibroblast growth factor receptor subfamily. Monomer. Homodimer after ligand binding. Interacts predominantly with FGF1 and FGF2, but can also interact with FGF3, FGF4, FGF5, FGF6, FGF8, FGF10, FGF19, FGF21, FGF22 and FGF23 (in vitro). Ligand specificity is determined by tissue-specific expression of isoforms, and differences in the third Ig-like domain are crucial for ligand specificity. Affinity for fibroblast growth factors (FGFs) is increased by heparan sulfate glycosaminoglycans that function as coreceptors. Likewise, KLB increases the affinity for FGF19, FGF21 and FGF23. Interacts (phosphorylated on Tyr-766) with PLCG1 (via SH2 domains). Interacts with FRS2. Interacts with RPS6KA1. Interacts (via C-terminus) with NEDD4 (via WW3 domain). Interacts with KL. Interacts with SHB (via SH2 domain). Interacts with GRB10. Interacts with ANOS1; this interaction does not interfere with FGF2-binding to FGFR1, but prevents binding of heparin-bound FGF2. Interacts with SOX2 and SOX3. Interacts with FLRT1, FLRT2 and FLRT3. Found in a ternary complex with FGF1 and ITGAV:ITGB3. In terms of processing, autophosphorylated. Binding of FGF family members together with heparan sulfate proteoglycan or heparin promotes receptor dimerization and autophosphorylation on tyrosine residues. Autophosphorylation occurs in trans between the two FGFR molecules present in the dimer and proceeds in a highly ordered manner. Initial autophosphorylation at Tyr-653 increases the kinase activity by a factor of 50 to 100. After this, Tyr-583 becomes phosphorylated, followed by phosphorylation of Tyr-463, Tyr-766, Tyr-583 and Tyr-585. In a third stage, Tyr-654 is autophosphorylated, resulting in a further tenfold increase of kinase activity. Phosphotyrosine residues provide docking sites for interacting proteins and so are crucial for FGFR1 function and its regulation. Post-translationally, ubiquitinated. FGFR1 is rapidly ubiquitinated by NEDD4 after autophosphorylation, leading to internalization and lysosomal degradation. CBL is recruited to activated FGFR1 via FRS2 and GRB2, and mediates ubiquitination and subsequent degradation of FGFR1. N-glycosylated in the endoplasmic reticulum. The N-glycan chains undergo further maturation to an Endo H-resistant form in the Golgi apparatus. Detected in astrocytoma, neuroblastoma and adrenal cortex cell lines. Some isoforms are detected in foreskin fibroblast cell lines, however isoform 17, isoform 18 and isoform 19 are not detected in these cells.

Its subcellular location is the cell membrane. It is found in the nucleus. The protein resides in the cytoplasm. The protein localises to the cytosol. It localises to the cytoplasmic vesicle. It carries out the reaction L-tyrosyl-[protein] + ATP = O-phospho-L-tyrosyl-[protein] + ADP + H(+). Its activity is regulated as follows. Present in an inactive conformation in the absence of bound ligand. Ligand binding leads to dimerization and activation by sequential autophosphorylation on tyrosine residues. Inhibited by ARQ 069; this compound maintains the kinase in an inactive conformation and inhibits autophosphorylation. Inhibited by PD173074. Functionally, tyrosine-protein kinase that acts as a cell-surface receptor for fibroblast growth factors and plays an essential role in the regulation of embryonic development, cell proliferation, differentiation and migration. Required for normal mesoderm patterning and correct axial organization during embryonic development, normal skeletogenesis and normal development of the gonadotropin-releasing hormone (GnRH) neuronal system. Phosphorylates PLCG1, FRS2, GAB1 and SHB. Ligand binding leads to the activation of several signaling cascades. Activation of PLCG1 leads to the production of the cellular signaling molecules diacylglycerol and inositol 1,4,5-trisphosphate. Phosphorylation of FRS2 triggers recruitment of GRB2, GAB1, PIK3R1 and SOS1, and mediates activation of RAS, MAPK1/ERK2, MAPK3/ERK1 and the MAP kinase signaling pathway, as well as of the AKT1 signaling pathway. Promotes phosphorylation of SHC1, STAT1 and PTPN11/SHP2. In the nucleus, enhances RPS6KA1 and CREB1 activity and contributes to the regulation of transcription. FGFR1 signaling is down-regulated by IL17RD/SEF, and by FGFR1 ubiquitination, internalization and degradation. The polypeptide is Fibroblast growth factor receptor 1 (FGFR1) (Homo sapiens (Human)).